Reading from the N-terminus, the 386-residue chain is Succinate--CoA ligase [ADP-forming] subunit beta (386 aa).

Positions 9–244 constitute an ATP-grasp domain; sequence KAVLRSYGVS…LDEEDAKEIE (236 aa). Residues Lys-46, 53-55, Glu-99, Cys-102, and Glu-107 each bind ATP; that span reads GRG. The Mg(2+) site is built by Asn-199 and Asp-213. Substrate contacts are provided by residues Asn-264 and 321–323; that span reads GIM.

Belongs to the succinate/malate CoA ligase beta subunit family. Heterotetramer of two alpha and two beta subunits. Mg(2+) serves as cofactor.

It carries out the reaction succinate + ATP + CoA = succinyl-CoA + ADP + phosphate. It catalyses the reaction GTP + succinate + CoA = succinyl-CoA + GDP + phosphate. It participates in carbohydrate metabolism; tricarboxylic acid cycle; succinate from succinyl-CoA (ligase route): step 1/1. Its function is as follows. Succinyl-CoA synthetase functions in the citric acid cycle (TCA), coupling the hydrolysis of succinyl-CoA to the synthesis of either ATP or GTP and thus represents the only step of substrate-level phosphorylation in the TCA. The beta subunit provides nucleotide specificity of the enzyme and binds the substrate succinate, while the binding sites for coenzyme A and phosphate are found in the alpha subunit. The polypeptide is Succinate--CoA ligase [ADP-forming] subunit beta (Bacillus anthracis (strain A0248)).